Here is a 517-residue protein sequence, read N- to C-terminus: ATP synthase subunit alpha 1 (517 aa).

Residue 174 to 181 (GDRQTGKT) participates in ATP binding.

Belongs to the ATPase alpha/beta chains family. As to quaternary structure, F-type ATPases have 2 components, CF(1) - the catalytic core - and CF(0) - the membrane proton channel. CF(1) has five subunits: alpha(3), beta(3), gamma(1), delta(1), epsilon(1). CF(0) has three main subunits: a(1), b(2) and c(9-12). The alpha and beta chains form an alternating ring which encloses part of the gamma chain. CF(1) is attached to CF(0) by a central stalk formed by the gamma and epsilon chains, while a peripheral stalk is formed by the delta and b chains.

It localises to the cell inner membrane. It carries out the reaction ATP + H2O + 4 H(+)(in) = ADP + phosphate + 5 H(+)(out). Functionally, produces ATP from ADP in the presence of a proton gradient across the membrane. The alpha chain is a regulatory subunit. The chain is ATP synthase subunit alpha 1 from Albidiferax ferrireducens (strain ATCC BAA-621 / DSM 15236 / T118) (Rhodoferax ferrireducens).